The primary structure comprises 568 residues: Urease subunit alpha (568 aa).

Residues 129-568 enclose the Urease domain; sequence GAIDSHIHFI…LPMAQRYFLF (440 aa). Ni(2+) contacts are provided by H134, H136, and K217. K217 carries the post-translational modification N6-carboxylysine. A substrate-binding site is contributed by H219. 2 residues coordinate Ni(2+): H246 and H272. H320 functions as the Proton donor in the catalytic mechanism. D360 is a Ni(2+) binding site.

It belongs to the metallo-dependent hydrolases superfamily. Urease alpha subunit family. In terms of assembly, heterotrimer of UreA (gamma), UreB (beta) and UreC (alpha) subunits. Three heterotrimers associate to form the active enzyme. Ni cation is required as a cofactor. Carboxylation allows a single lysine to coordinate two nickel ions.

The protein localises to the cytoplasm. The enzyme catalyses urea + 2 H2O + H(+) = hydrogencarbonate + 2 NH4(+). The protein operates within nitrogen metabolism; urea degradation; CO(2) and NH(3) from urea (urease route): step 1/1. The protein is Urease subunit alpha of Saccharophagus degradans (strain 2-40 / ATCC 43961 / DSM 17024).